A 395-amino-acid chain; its full sequence is Fe(3+) ions import ATP-binding protein FbpC 2 (395 aa).

Residues 1 to 21 are disordered; that stretch reads MHIAQELADETCNSPRGAGHA. The region spanning 23 to 264 is the ABC transporter domain; that stretch reads LRYPSDRRTA…PKTLFVADFI (242 aa). 66 to 73 is a binding site for ATP; the sequence is GPSGCGKT.

It belongs to the ABC transporter superfamily. Fe(3+) ion importer (TC 3.A.1.10) family. The complex is composed of two ATP-binding proteins (FbpC), two transmembrane proteins (FbpB) and a solute-binding protein (FbpA).

The protein localises to the cell inner membrane. It carries out the reaction Fe(3+)(out) + ATP + H2O = Fe(3+)(in) + ADP + phosphate + H(+). In terms of biological role, part of the ABC transporter complex FbpABC involved in Fe(3+) ions import. Responsible for energy coupling to the transport system. This Rhizobium meliloti (strain 1021) (Ensifer meliloti) protein is Fe(3+) ions import ATP-binding protein FbpC 2.